The primary structure comprises 210 residues: Large ribosomal subunit protein uL3 (210 aa).

A disordered region spans residues 123-144; sequence KRHGQSRGPMAHGSRYHRRPGS.

The protein belongs to the universal ribosomal protein uL3 family. As to quaternary structure, part of the 50S ribosomal subunit. Forms a cluster with proteins L14 and L19.

Its function is as follows. One of the primary rRNA binding proteins, it binds directly near the 3'-end of the 23S rRNA, where it nucleates assembly of the 50S subunit. This chain is Large ribosomal subunit protein uL3, found in Alkaliphilus metalliredigens (strain QYMF).